Consider the following 196-residue polypeptide: Large ribosomal subunit protein uL5 (196 aa).

The protein belongs to the universal ribosomal protein uL5 family. In terms of assembly, part of the 50S ribosomal subunit; part of the 5S rRNA/L5/L18/L25 subcomplex. Contacts the 5S rRNA and the P site tRNA. Forms a bridge to the 30S subunit in the 70S ribosome.

Functionally, this is one of the proteins that bind and probably mediate the attachment of the 5S RNA into the large ribosomal subunit, where it forms part of the central protuberance. In the 70S ribosome it contacts protein S13 of the 30S subunit (bridge B1b), connecting the 2 subunits; this bridge is implicated in subunit movement. Contacts the P site tRNA; the 5S rRNA and some of its associated proteins might help stabilize positioning of ribosome-bound tRNAs. The chain is Large ribosomal subunit protein uL5 from Rhodopirellula baltica (strain DSM 10527 / NCIMB 13988 / SH1).